Reading from the N-terminus, the 217-residue chain is ATP-dependent Clp protease proteolytic subunit 3 (217 aa).

Over residues 1-13 (MSPFTAGPAPART) the composition is skewed to low complexity. The tract at residues 1 to 23 (MSPFTAGPAPARTPRAEEGDTPA) is disordered. The active-site Nucleophile is Ser-108. His-133 is a catalytic residue.

It belongs to the peptidase S14 family. In terms of assembly, fourteen ClpP subunits assemble into 2 heptameric rings which stack back to back to give a disk-like structure with a central cavity, resembling the structure of eukaryotic proteasomes.

The protein localises to the cytoplasm. It carries out the reaction Hydrolysis of proteins to small peptides in the presence of ATP and magnesium. alpha-casein is the usual test substrate. In the absence of ATP, only oligopeptides shorter than five residues are hydrolyzed (such as succinyl-Leu-Tyr-|-NHMec, and Leu-Tyr-Leu-|-Tyr-Trp, in which cleavage of the -Tyr-|-Leu- and -Tyr-|-Trp bonds also occurs).. Cleaves peptides in various proteins in a process that requires ATP hydrolysis. Has a chymotrypsin-like activity. Plays a major role in the degradation of misfolded proteins. This is ATP-dependent Clp protease proteolytic subunit 3 from Streptomyces coelicolor (strain ATCC BAA-471 / A3(2) / M145).